A 240-amino-acid chain; its full sequence is MANITLSTQHYRIHRSDVEPVKEKTTDKDVFAKSITAVRNSFISLSTSLSDRFSLHLQTDIPTTHFHRGSASEGRAVLTSKTVKDFMLQKLNSLDIKGNASKDPAYARQTCEAMLSAVYSNNKDHCCKLLISKGVSITPFLKEIGEAAQNAGLPGEIKNGVFTPGGAGANPFVVPLIAAASIKYPHMFINHNQQVSFKAYAEKIVMKEVTPLFNKGTMPTPQQFQLTIENIANKYLQNAS.

Positions 78–240 (LTSKTVKDFM…IANKYLQNAS (163 aa)) are GEF catalytic domain.

This sequence belongs to the GEF (guanine exchange factor) SopE family.

The protein resides in the secreted. Activator for CDC42 by directly engaging this Rho GTPase and acting as potent guanine nucleotide exchange factor (GEF). This activation results in actin cytoskeleton rearrangements and stimulates membrane ruffling, promoting bacterial entry into non-phagocytic cells. Chaperone InvB is required for secretion, translocation and stabilization of intracellular levels of sopE2. The polypeptide is Guanine nucleotide exchange factor sopE2 (sopE2) (Salmonella paratyphi A (strain ATCC 9150 / SARB42)).